A 127-amino-acid polypeptide reads, in one-letter code: Small ribosomal subunit protein uS12 (127 aa).

D89 bears the 3-methylthioaspartic acid mark.

Belongs to the universal ribosomal protein uS12 family. As to quaternary structure, part of the 30S ribosomal subunit. Contacts proteins S8 and S17. May interact with IF1 in the 30S initiation complex.

With S4 and S5 plays an important role in translational accuracy. In terms of biological role, interacts with and stabilizes bases of the 16S rRNA that are involved in tRNA selection in the A site and with the mRNA backbone. Located at the interface of the 30S and 50S subunits, it traverses the body of the 30S subunit contacting proteins on the other side and probably holding the rRNA structure together. The combined cluster of proteins S8, S12 and S17 appears to hold together the shoulder and platform of the 30S subunit. In Aliarcobacter butzleri (strain RM4018) (Arcobacter butzleri), this protein is Small ribosomal subunit protein uS12.